The chain runs to 385 residues: Succinyl-diaminopimelate desuccinylase (385 aa).

Histidine 78 serves as a coordination point for Zn(2+). Aspartate 80 is an active-site residue. Aspartate 110 is a binding site for Zn(2+). The Proton acceptor role is filled by glutamate 144. Positions 145, 173, and 358 each coordinate Zn(2+).

It belongs to the peptidase M20A family. DapE subfamily. Homodimer. Requires Zn(2+) as cofactor. Co(2+) is required as a cofactor.

The enzyme catalyses N-succinyl-(2S,6S)-2,6-diaminopimelate + H2O = (2S,6S)-2,6-diaminopimelate + succinate. It participates in amino-acid biosynthesis; L-lysine biosynthesis via DAP pathway; LL-2,6-diaminopimelate from (S)-tetrahydrodipicolinate (succinylase route): step 3/3. Catalyzes the hydrolysis of N-succinyl-L,L-diaminopimelic acid (SDAP), forming succinate and LL-2,6-diaminopimelate (DAP), an intermediate involved in the bacterial biosynthesis of lysine and meso-diaminopimelic acid, an essential component of bacterial cell walls. In Gluconacetobacter diazotrophicus (strain ATCC 49037 / DSM 5601 / CCUG 37298 / CIP 103539 / LMG 7603 / PAl5), this protein is Succinyl-diaminopimelate desuccinylase.